Consider the following 145-residue polypeptide: MDLLLINGPNLNLVGKREPSIYGSQTLEDIQEELLTLANELGANLKFFQSNSEGEMIDCIQNSVGSIDGILINAGAYTHTSIALRDALLGVAIPYVEVHLSNIYSREEFRHKSFLSDKALGLVCGFGANSYQLALEGIVSYLKRV.

Tyrosine 22 functions as the Proton acceptor in the catalytic mechanism. Residues asparagine 73, histidine 79, and aspartate 86 each contribute to the substrate site. Histidine 99 (proton donor) is an active-site residue. Substrate contacts are provided by residues 100 to 101 (LS) and arginine 110.

Belongs to the type-II 3-dehydroquinase family. Homododecamer.

It carries out the reaction 3-dehydroquinate = 3-dehydroshikimate + H2O. The protein operates within metabolic intermediate biosynthesis; chorismate biosynthesis; chorismate from D-erythrose 4-phosphate and phosphoenolpyruvate: step 3/7. Functionally, catalyzes a trans-dehydration via an enolate intermediate. The sequence is that of 3-dehydroquinate dehydratase from Prochlorococcus marinus (strain NATL1A).